The sequence spans 183 residues: Inosine/xanthosine triphosphatase (183 aa).

D75 is a binding site for Mg(2+). 75–76 (DG) provides a ligand contact to substrate.

This sequence belongs to the YjjX NTPase family. In terms of assembly, homodimer. Mg(2+) serves as cofactor. Requires Mn(2+) as cofactor.

The catalysed reaction is XTP + H2O = XDP + phosphate + H(+). The enzyme catalyses ITP + H2O = IDP + phosphate + H(+). Functionally, phosphatase that hydrolyzes non-canonical purine nucleotides such as XTP and ITP to their respective diphosphate derivatives. Probably excludes non-canonical purines from DNA/RNA precursor pool, thus preventing their incorporation into DNA/RNA and avoiding chromosomal lesions. In Vibrio vulnificus (strain YJ016), this protein is Inosine/xanthosine triphosphatase.